Here is a 203-residue protein sequence, read N- to C-terminus: A-type ATP synthase subunit E (203 aa).

The protein belongs to the V-ATPase E subunit family. Has multiple subunits with at least A(3), B(3), C, D, E, F, H, I and proteolipid K(x).

It localises to the cell membrane. Its function is as follows. Component of the A-type ATP synthase that produces ATP from ADP in the presence of a proton gradient across the membrane. This is A-type ATP synthase subunit E from Methanococcus vannielii (strain ATCC 35089 / DSM 1224 / JCM 13029 / OCM 148 / SB).